The chain runs to 163 residues: Oocyte-secreted protein 1 (163 aa).

Residues methionine 1–alanine 21 form the signal peptide.

This sequence belongs to the PLAC1 family. As to expression, oocyte-specific.

Its subcellular location is the secreted. May be involved in cell differentiation. The protein is Oocyte-secreted protein 1 (OOSP1) of Bos taurus (Bovine).